The primary structure comprises 221 residues: 7-cyano-7-deazaguanine synthase (221 aa).

8–18 (LSGGMDSAAVI) is an ATP binding site. Cys186, Cys196, Cys199, and Cys202 together coordinate Zn(2+).

Belongs to the QueC family. Zn(2+) serves as cofactor.

The catalysed reaction is 7-carboxy-7-deazaguanine + NH4(+) + ATP = 7-cyano-7-deazaguanine + ADP + phosphate + H2O + H(+). It participates in purine metabolism; 7-cyano-7-deazaguanine biosynthesis. Its function is as follows. Catalyzes the ATP-dependent conversion of 7-carboxy-7-deazaguanine (CDG) to 7-cyano-7-deazaguanine (preQ(0)). This is 7-cyano-7-deazaguanine synthase from Stenotrophomonas maltophilia (strain K279a).